Here is a 303-residue protein sequence, read N- to C-terminus: Acidic endochitinase WIN6.2B (303 aa).

The N-terminal stretch at 1-21 (MSVWAFAFFSLFLSLSVRGSA) is a signal peptide. Positions 22-62 (EQCGQQAGDALCPGGLCCSSYGWCGTTADYCGDGCQSQCDG) constitute a Chitin-binding type-1 domain. 4 disulfides stabilise this stretch: cysteine 24-cysteine 39, cysteine 33-cysteine 45, cysteine 38-cysteine 52, and cysteine 56-cysteine 60. Positions 82–303 (DGYLSDIIPE…YGLLGLKDTM (222 aa)) are chitinase. Residue glutamate 150 is the Proton donor of the active site. A disulfide bridge links cysteine 253 with cysteine 286.

This sequence belongs to the glycosyl hydrolase 19 family. Chitinase class I subfamily.

It catalyses the reaction Random endo-hydrolysis of N-acetyl-beta-D-glucosaminide (1-&gt;4)-beta-linkages in chitin and chitodextrins.. Functionally, defense against chitin-containing fungal pathogens. The protein is Acidic endochitinase WIN6.2B of Populus trichocarpa (Western balsam poplar).